The chain runs to 120 residues: Glycophorin-A (120 aa).

Gln1 carries the pyrrolidone carboxylic acid modification. The segment at 1–40 is disordered; the sequence is QTIATGSPPIAGTSDLSTITSAATPTFTTEQDGREQGDGL. Thr2 and Thr5 each carry an O-linked (GalNAc...) threonine glycan. The O-linked (GalNAc...) serine glycan is linked to Ser7. The O-linked (GalNAc...) threonine glycan is linked to Thr13. Ser17 carries O-linked (GalNAc...) serine glycosylation. Over residues 17–29 the composition is skewed to low complexity; that stretch reads STITSAATPTFTT. 2 O-linked (GalNAc...) threonine glycosylation sites follow: Thr18 and Thr20. A glycan (O-linked (GalNAc...) serine) is linked at Ser21. O-linked (GalNAc...) threonine glycosylation is found at Thr24 and Thr28. The helical transmembrane segment at 50-72 threads the bilayer; it reads VITVIILGVMAGIIGIILLLAYV. A disordered region spans residues 78–120; sequence KRPPADVPPPASTVPSADAPPPVSEDDETSLTSVETDYPGDSQ. Residues 82–100 are compositionally biased toward pro residues; sequence ADVPPPASTVPSADAPPPV. The span at 107-120 shows a compositional bias: polar residues; the sequence is SLTSVETDYPGDSQ. Ser119 bears the Phosphoserine mark.

This sequence belongs to the glycophorin-A family. In terms of assembly, homodimer.

It is found in the membrane. In terms of biological role, glycophorin A is the major intrinsic membrane sialoglycoprotein of the erythrocyte. Appears to be important for the function of SLC4A1 and is required for high activity of SLC4A1. May be involved in translocation of SLC4A1 to the plasma membrane. This Equus caballus (Horse) protein is Glycophorin-A.